Here is a 360-residue protein sequence, read N- to C-terminus: RNA-binding protein 1 (360 aa).

The region spanning 6–82 (YKLFVGGIAK…KPVDVRKAIR (77 aa)) is the RRM 1 domain. Positions 93 to 113 (MQFLERKVQQMNGGLREMSSN) form a coiled coil. Residues 120–197 (KKIFVGGLSS…KRVEVKRAIP (78 aa)) form the RRM 2 domain.

In terms of tissue distribution, highly expressed in inflorescences and roots. Detected in leaves and seedlings, but not in stems. Expressed in vegetative shoot apex and root meristem, but not in root cap. Detected in flower buds, junction of pedicels, joints of immature siliques and pistil.

RNA binding protein. Can also bind in vitro to single-stranded DNA. The chain is RNA-binding protein 1 (RBP1) from Arabidopsis thaliana (Mouse-ear cress).